The following is a 76-amino-acid chain: uncharacterized protein (76 aa).

The segment at 27-76 (SINNGEGSSVVHRDATAPPTPPVVPTSTLQVPGLQRARTPEPNDPRVANL) is disordered.

This is an uncharacterized protein from Caenorhabditis elegans.